The chain runs to 353 residues: Protein pelota homolog (353 aa).

It belongs to the eukaryotic release factor 1 family. Pelota subfamily. In terms of assembly, monomer. It depends on a divalent metal cation as a cofactor.

It is found in the cytoplasm. Functionally, may function in recognizing stalled ribosomes, interact with stem-loop structures in stalled mRNA molecules, and effect endonucleolytic cleavage of the mRNA. May play a role in the release non-functional ribosomes and degradation of damaged mRNAs. Has endoribonuclease activity. The protein is Protein pelota homolog of Methanothermobacter thermautotrophicus (strain ATCC 29096 / DSM 1053 / JCM 10044 / NBRC 100330 / Delta H) (Methanobacterium thermoautotrophicum).